The chain runs to 906 residues: Protein translocase subunit SecA (906 aa).

Residues Gln86, 104–108 (GEGKT), and Asp499 contribute to the ATP site. Residues 862–886 (KPVVSRIDPKDRNPDDPTSWGRVSR) form a disordered region. Residues Cys890, Cys892, Cys901, and His902 each coordinate Zn(2+).

Belongs to the SecA family. In terms of assembly, monomer and homodimer. Part of the essential Sec protein translocation apparatus which comprises SecA, SecYEG and auxiliary proteins SecDF-YajC and YidC. The cofactor is Zn(2+).

The protein resides in the cell inner membrane. Its subcellular location is the cytoplasm. It carries out the reaction ATP + H2O + cellular proteinSide 1 = ADP + phosphate + cellular proteinSide 2.. Its function is as follows. Part of the Sec protein translocase complex. Interacts with the SecYEG preprotein conducting channel. Has a central role in coupling the hydrolysis of ATP to the transfer of proteins into and across the cell membrane, serving both as a receptor for the preprotein-SecB complex and as an ATP-driven molecular motor driving the stepwise translocation of polypeptide chains across the membrane. The polypeptide is Protein translocase subunit SecA (Rickettsia africae (strain ESF-5)).